The chain runs to 787 residues: (-)-kolavenyl diphosphate synthase, chloroplastic (787 aa).

The transit peptide at 1 to 47 (MSFATSLPRPTTTGAAGFGLPLATCISLSVSHSFSPKFGICNNTSLR) directs the protein to the chloroplast. K237 is a binding site for substrate. Positions 368 and 370 each coordinate Mg(2+). The short motif at 368-371 (DSDD) is the DXDD motif element. K454 provides a ligand contact to substrate.

Belongs to the terpene synthase family. Tpsc subfamily. Requires Mg(2+) as cofactor. In terms of tissue distribution, expressed in peltate glandular trichomes of leaves. Highly expressed in the first leaf pair.

Its subcellular location is the plastid. The protein localises to the chloroplast. It catalyses the reaction (2E,6E,10E)-geranylgeranyl diphosphate = (-)-kolavenyl diphosphate. With respect to regulation, inhibited by high concentrations of magnesium. Involved in the biosynthesis of clerodane diterpenoids natural products, including salvinorin A with potent agonistic activity on brain kappa-opioid receptors, thus conferring hallucinogenic properties. Diterpene synthase that catalyzes the formation of (-)-kolavenyl diphosphate from geranylgeranyl diphosphate (GGPP) as the first reaction in salvinorin A biosynthesis. The sequence is that of (-)-kolavenyl diphosphate synthase, chloroplastic from Salvia divinorum (Maria pastora).